The following is a 201-amino-acid chain: Potassium-transporting ATPase KdpC subunit (201 aa).

A helical membrane pass occupies residues 12 to 34 (LLALTMITGLAYPLAVTGLATVL). The disordered stretch occupies residues 69-102 (RPSATVAPDPADSSKTVSAPYNAANSGGSNLGPT). The segment covering 81-101 (SSKTVSAPYNAANSGGSNLGP) has biased composition (polar residues).

This sequence belongs to the KdpC family. The system is composed of three essential subunits: KdpA, KdpB and KdpC.

It is found in the cell inner membrane. Part of the high-affinity ATP-driven potassium transport (or Kdp) system, which catalyzes the hydrolysis of ATP coupled with the electrogenic transport of potassium into the cytoplasm. This subunit acts as a catalytic chaperone that increases the ATP-binding affinity of the ATP-hydrolyzing subunit KdpB by the formation of a transient KdpB/KdpC/ATP ternary complex. The protein is Potassium-transporting ATPase KdpC subunit of Rhodopseudomonas palustris (strain TIE-1).